The following is a 233-amino-acid chain: 3,4-dihydroxy-2-butanone 4-phosphate synthase (233 aa).

Glu-37 lines the Mg(2+) pocket. Residue Glu-37 coordinates Mn(2+). Asp-41 contacts D-ribulose 5-phosphate. Residue Cys-66 is modified to S-glutathionyl cysteine. Residues Thr-92 and 150–154 (RRGHT) contribute to the D-ribulose 5-phosphate site. His-153 provides a ligand contact to Mg(2+). Residue His-153 participates in Mn(2+) binding.

Homodimer. Requires Mg(2+) as cofactor. The cofactor is Mn(2+). S-glutathionylation is reversible and dependent on a glutaredoxin.

The enzyme catalyses D-ribulose 5-phosphate = (2S)-2-hydroxy-3-oxobutyl phosphate + formate + H(+). The protein operates within cofactor biosynthesis; riboflavin biosynthesis; 2-hydroxy-3-oxobutyl phosphate from D-ribulose 5-phosphate: step 1/1. Functionally, catalyzes the conversion of D-ribulose 5-phosphate to formate and 3,4-dihydroxy-2-butanone 4-phosphate. This is 3,4-dihydroxy-2-butanone 4-phosphate synthase (RIB3) from Pyricularia oryzae (strain 70-15 / ATCC MYA-4617 / FGSC 8958) (Rice blast fungus).